Consider the following 369-residue polypeptide: Thyroid hormone receptor beta (369 aa).

Residues 1–14 (MSGYIPSYLDKDEL) are modulating. Cys-15, Cys-18, Cys-32, Cys-35, Cys-53, Cys-59, Cys-69, and Cys-72 together coordinate Zn(2+). 2 NR C4-type zinc fingers span residues 15-35 (CVVCGDKATGYHYRCITCEGC) and 53-77 (CKYEGKCVIDKVTRNQCQECRFKKC). The nuclear receptor DNA-binding region spans 15 to 89 (CVVCGDKATG…VGMATDLVLD (75 aa)). The NR LBD domain occupies 125 to 369 (EEWELIKIVT…PPLFLEVFED (245 aa)). 3 residues coordinate 3,3',5-triiodo-L-thyronine: Arg-190, Asn-239, and His-343. L-thyroxine contacts are provided by Arg-190, Asn-239, and His-343.

Belongs to the nuclear hormone receptor family. NR1 subfamily.

The protein localises to the nucleus. Nuclear hormone receptor that can act as a repressor or activator of transcription. High affinity receptor for thyroid hormones, including triiodothyronine and thyroxine. This Cairina moschata (Muscovy duck) protein is Thyroid hormone receptor beta (THRB).